Reading from the N-terminus, the 970-residue chain is uncharacterized protein (970 aa).

A disordered region spans residues 942–970 (QLSFEEDGWTESEPRPVRREAHVRAKERH). The segment covering 953-970 (SEPRPVRREAHVRAKERH) has biased composition (basic and acidic residues).

This is an uncharacterized protein from Frog virus 3 (isolate Goorha) (FV-3).